A 414-amino-acid chain; its full sequence is MANRQRVLGIVLAGGQGRRLLPLTADRAKPAVPFGGIYRLIDFVLSNLANAGFLKIVVLTQYKNHSLDRHITTTWRMSTLLGNYVTPVPAQQRVGPRWFSGSADAIFQSLNLVYDEQPDYILVFGADHIYRMDPRQMLEEHIASGASVTVAAVRVPRKDAHAFGVIQPAASGPERGRRVARFLEKPADTEGLGLPDAPDEVFASMGNYCFTTAALLDAVIRDAADERSAHDMGGNIIPMFVERGDAAVYDFHTNQVPGSTPRDHAYWRDVGTLDAYYDAHQDLVSVHPIFNLYNQDWPIYTHHRPLPPAKIVHDGTSVVDSLLSDGVIVADARVSRSVLSPSVYVDRGAVIEGCVLLDNVHIGRGAVVRNAIIDKNVVVPDGAAIGVDPQRDAERFTVSEGGIVVIAKNAVVEP.

Residues G164, E184–K185, and S204 contribute to the alpha-D-glucose 1-phosphate site.

It belongs to the bacterial/plant glucose-1-phosphate adenylyltransferase family. In terms of assembly, homotetramer.

The enzyme catalyses alpha-D-glucose 1-phosphate + ATP + H(+) = ADP-alpha-D-glucose + diphosphate. Its pathway is glycan biosynthesis; glycogen biosynthesis. Functionally, involved in the biosynthesis of ADP-glucose, a building block required for the elongation reactions to produce glycogen. Catalyzes the reaction between ATP and alpha-D-glucose 1-phosphate (G1P) to produce pyrophosphate and ADP-Glc. The chain is Glucose-1-phosphate adenylyltransferase from Acidothermus cellulolyticus (strain ATCC 43068 / DSM 8971 / 11B).